Reading from the N-terminus, the 127-residue chain is MSKPFYVRFEVPPELAEKAYQALEIARKTGKIKKGTNETTKCVERGLAKLVLIAEDVDPPEIVAHLPLLCEEKKIPYVYVPSKKRLGEAAGIEVAAASACIIDPGEAKNLVEEIVKAVNELKTKAAQ.

This sequence belongs to the eukaryotic ribosomal protein eL8 family. In terms of assembly, part of the 50S ribosomal subunit. Probably part of the RNase P complex.

It is found in the cytoplasm. Functionally, multifunctional RNA-binding protein that recognizes the K-turn motif in ribosomal RNA, the RNA component of RNase P, box H/ACA, box C/D and box C'/D' sRNAs. This is Large ribosomal subunit protein eL8 from Hyperthermus butylicus (strain DSM 5456 / JCM 9403 / PLM1-5).